The following is a 156-amino-acid chain: Cyanate hydratase (156 aa).

Active-site residues include Arg96, Glu99, and Ser122.

It belongs to the cyanase family.

It catalyses the reaction cyanate + hydrogencarbonate + 3 H(+) = NH4(+) + 2 CO2. In terms of biological role, catalyzes the reaction of cyanate with bicarbonate to produce ammonia and carbon dioxide. The protein is Cyanate hydratase of Mycobacteroides abscessus (strain ATCC 19977 / DSM 44196 / CCUG 20993 / CIP 104536 / JCM 13569 / NCTC 13031 / TMC 1543 / L948) (Mycobacterium abscessus).